The following is an 862-amino-acid chain: Probable glutaminase ARB_05535/05536 (862 aa).

Positions 1–19 (MLSWVLLAWAVACSALAGA) are cleaved as a signal peptide. Asn106, Asn273, Asn436, Asn448, Asn486, Asn610, and Asn744 each carry an N-linked (GlcNAc...) asparagine glycan. Residues 798 to 862 (FLDDKDNNSP…SQMTIVNEND (65 aa)) are disordered. Residues 853-862 (SQMTIVNEND) show a composition bias toward polar residues.

This sequence belongs to the fungal glutaminase gtaA family.

The protein localises to the secreted. The catalysed reaction is L-glutamine + H2O = L-glutamate + NH4(+). Glutaminase catalyzes the hydrolysis of glutamine to glutamic acid and plays a key role in nitrogen metabolism. This is Probable glutaminase ARB_05535/05536 from Arthroderma benhamiae (strain ATCC MYA-4681 / CBS 112371) (Trichophyton mentagrophytes).